A 149-amino-acid chain; its full sequence is Arginine regulator (149 aa).

Belongs to the ArgR family.

It localises to the cytoplasm. It functions in the pathway amino-acid degradation; L-arginine degradation via ADI pathway. Its function is as follows. Regulates the transcription of the arc operon, involved in arginine catabolism. This Bacillus cereus (strain ATCC 14579 / DSM 31 / CCUG 7414 / JCM 2152 / NBRC 15305 / NCIMB 9373 / NCTC 2599 / NRRL B-3711) protein is Arginine regulator (argR1).